The following is a 321-amino-acid chain: GTP 3',8-cyclase (321 aa).

Residues 5–227 (SYDRVVDYLR…DEGYDGASPS (223 aa)) form the Radical SAM core domain. R14 lines the GTP pocket. Positions 21 and 25 each coordinate [4Fe-4S] cluster. Position 27 (Y27) interacts with S-adenosyl-L-methionine. C28 lines the [4Fe-4S] cluster pocket. R64 provides a ligand contact to GTP. G68 is a binding site for S-adenosyl-L-methionine. T95 is a binding site for GTP. S119 serves as a coordination point for S-adenosyl-L-methionine. Residue K155 participates in GTP binding. M189 serves as a coordination point for S-adenosyl-L-methionine. 2 residues coordinate [4Fe-4S] cluster: C249 and C252. 254–256 (RIR) lines the GTP pocket. C266 provides a ligand contact to [4Fe-4S] cluster.

Belongs to the radical SAM superfamily. MoaA family. Monomer and homodimer. Requires [4Fe-4S] cluster as cofactor.

It catalyses the reaction GTP + AH2 + S-adenosyl-L-methionine = (8S)-3',8-cyclo-7,8-dihydroguanosine 5'-triphosphate + 5'-deoxyadenosine + L-methionine + A + H(+). Its pathway is cofactor biosynthesis; molybdopterin biosynthesis. Catalyzes the cyclization of GTP to (8S)-3',8-cyclo-7,8-dihydroguanosine 5'-triphosphate. This Sulfurimonas denitrificans (strain ATCC 33889 / DSM 1251) (Thiomicrospira denitrificans (strain ATCC 33889 / DSM 1251)) protein is GTP 3',8-cyclase.